The primary structure comprises 476 residues: MEFQTTLPSIRAVRTGEVRAEAALQECLGAIDAHNGEVNAYLSLDRDGAGARARHIDALSREERAKLPMGGVPFGIKDVLTVEGMPATASSKILEGYRPPYTATAVQRLIDAGAVLVGKLNCDEFAMGSSNENSAYGPVKNPRALDRVPGGSSGGSAAAVAANMAVATLGTDTGGSIRQPASFCGVVGVLPTYGRVSRYGLIAFASSLDRVGPFAHTVRDAAEVLGVIAGHDPMDATSSSVPVPDYTEKLDAGVKGLRLGVPAEYFAEGLDPEVKRAVEGTIEQLRAAGAEVKPISLPHTPYAIPTYYVIATAEASANLARFDGVRYGLRAPEANTLAAMYRQTRDLGFGAEVKRRILLGTYVLSAGYYDAYYKKAQQVRRLLAQDFLRAFEEVDAIVTPTAPTPAFKLGEKSDDPLSMYLADIYTVTANLAGICGASVPCGTSREGLPIGIQILGRHFDEATVLRVGQAVESLQK.

Residues Lys-77 and Ser-152 each act as charge relay system in the active site. Ser-176 functions as the Acyl-ester intermediate in the catalytic mechanism.

Belongs to the amidase family. GatA subfamily. Heterotrimer of A, B and C subunits.

It catalyses the reaction L-glutamyl-tRNA(Gln) + L-glutamine + ATP + H2O = L-glutaminyl-tRNA(Gln) + L-glutamate + ADP + phosphate + H(+). Allows the formation of correctly charged Gln-tRNA(Gln) through the transamidation of misacylated Glu-tRNA(Gln) in organisms which lack glutaminyl-tRNA synthetase. The reaction takes place in the presence of glutamine and ATP through an activated gamma-phospho-Glu-tRNA(Gln). This Acidobacterium capsulatum (strain ATCC 51196 / DSM 11244 / BCRC 80197 / JCM 7670 / NBRC 15755 / NCIMB 13165 / 161) protein is Glutamyl-tRNA(Gln) amidotransferase subunit A.